Consider the following 542-residue polypeptide: Cytochrome P450 monooxygenase 91 (542 aa).

The N-terminal stretch at 1–22 is a signal peptide; that stretch reads MLDILRFVLICGILWILRRVLL. 2 N-linked (GlcNAc...) asparagine glycosylation sites follow: Asn299 and Asn392. Residue Cys482 participates in heme binding.

The protein belongs to the cytochrome P450 family. It depends on heme as a cofactor.

Its pathway is secondary metabolite biosynthesis. In terms of biological role, cytochrome P450 monooxygenase that is able to use dehydroabietic acid as a substrate for oxidation. The protein is Cytochrome P450 monooxygenase 91 of Postia placenta (strain ATCC 44394 / Madison 698-R) (Brown rot fungus).